Consider the following 130-residue polypeptide: Aspartate 1-decarboxylase (130 aa).

S25 acts as the Schiff-base intermediate with substrate; via pyruvic acid in catalysis. A Pyruvic acid (Ser) modification is found at S25. T57 contacts substrate. The Proton donor role is filled by Y58. 73–75 lines the substrate pocket; that stretch reads GAT.

It belongs to the PanD family. As to quaternary structure, heterooctamer of four alpha and four beta subunits. Pyruvate serves as cofactor. Is synthesized initially as an inactive proenzyme, which is activated by self-cleavage at a specific serine bond to produce a beta-subunit with a hydroxyl group at its C-terminus and an alpha-subunit with a pyruvoyl group at its N-terminus.

It is found in the cytoplasm. It carries out the reaction L-aspartate + H(+) = beta-alanine + CO2. Its pathway is cofactor biosynthesis; (R)-pantothenate biosynthesis; beta-alanine from L-aspartate: step 1/1. Its function is as follows. Catalyzes the pyruvoyl-dependent decarboxylation of aspartate to produce beta-alanine. This Lactiplantibacillus plantarum (strain ATCC BAA-793 / NCIMB 8826 / WCFS1) (Lactobacillus plantarum) protein is Aspartate 1-decarboxylase.